The primary structure comprises 232 residues: DOA4-independent degradation protein 4 (232 aa).

A coiled-coil region spans residues 14–97; it reads PQERLKKNQR…AISLRIQAVR (84 aa). An interaction with VPS4 region spans residues 183-232; it reads LQSTPQNLVSNAPIAETAMGIPEPIGAGSEFHGNPDDDLQARLNTLKKQT. The disordered stretch occupies residues 203-232; it reads IPEPIGAGSEFHGNPDDDLQARLNTLKKQT. Residues 219–229 carry the MIT-interacting motif motif; it reads DDLQARLNTLK.

This sequence belongs to the SNF7 family. As to quaternary structure, core component of the ESCRT-III complex (endosomal sorting required for transport complex III). ESCRT-III appears to be sequentially assembled as a flat lattice on the endosome membrane and forms a transient 450 kDa complex that contains DID4, oligomerized SNF7, VPS20 and VPS24. SNF7 oligomerization into a membrane-associated filament is nucleated by association of SNF7 with VPS20; the process is terminated through association of VPS24, possibly by capping the SNF7 filament. VPS24 subsequently associates with DID4/VPS2.

It is found in the cytoplasm. It localises to the endosome membrane. Functionally, required for the sorting and concentration of proteins resulting in the entry of these proteins into the invaginating vesicles of the multivesicular body (MVB). Acts a component of the ESCRT-III complex, which appears to be critical for late steps in MVB sorting, such as membrane invagination and final cargo sorting and recruitment of late-acting components of the sorting machinery. The MVB pathway requires the sequential function of ESCRT-O, -I,-II and -III complex assemblies. Can directly stimulate VPS4 ATPase activity. The DID4/VPS2-VPS24 subcomplex is required for the VPS4-dependent dissociation of ESCRT-III. In Saccharomyces cerevisiae (strain ATCC 204508 / S288c) (Baker's yeast), this protein is DOA4-independent degradation protein 4 (DID4).